A 149-amino-acid chain; its full sequence is Pleckstrin homology domain-containing family J member 1 (149 aa).

Residues 15–108 (RAEKAAELGM…WVEALTNASY (94 aa)) form the PH domain.

The protein is Pleckstrin homology domain-containing family J member 1 (plekhj1) of Xenopus laevis (African clawed frog).